Reading from the N-terminus, the 325-residue chain is Glutarate 2-hydroxylase (325 aa).

Fe cation-binding residues include His160, Asp162, and His292.

This sequence belongs to the glutarate hydroxylase family. As to quaternary structure, homotetramer. Requires Fe(2+) as cofactor.

It carries out the reaction glutarate + 2-oxoglutarate + O2 = (S)-2-hydroxyglutarate + succinate + CO2. It participates in amino-acid degradation. Acts as an alpha-ketoglutarate-dependent dioxygenase catalyzing hydroxylation of glutarate (GA) to L-2-hydroxyglutarate (L2HG). Functions in a L-lysine degradation pathway that proceeds via cadaverine, glutarate and L-2-hydroxyglutarate. This is Glutarate 2-hydroxylase from Escherichia fergusonii (strain ATCC 35469 / DSM 13698 / CCUG 18766 / IAM 14443 / JCM 21226 / LMG 7866 / NBRC 102419 / NCTC 12128 / CDC 0568-73).